The following is a 3130-amino-acid chain: DNA polymerase zeta catalytic subunit (3130 aa).

Disordered regions lie at residues 263–295 (AIWEDEKQRRRNRNETSQMSQPESQDHRFVPAT), 425–457 (GYRGERNRMPSPCRSFGNNKYPQNSDDEENEPQ), 487–510 (LCRNTHRSSTEDDDSSSGEEMEWS), 524–548 (LDGTADENSDNPLNNENSRTHSSVI), 697–728 (PNENTLGKNSFNFSDLNHSKNKVSSEGNEKGN), and 817–871 (VTYK…EKDN). Over residues 286–295 (SQDHRFVPAT) the composition is skewed to basic and acidic residues. Over residues 497–509 (EDDDSSSGEEMEW) the composition is skewed to acidic residues. Polar residues-rich tracts occupy residues 533 to 548 (DNPLNNENSRTHSSVI) and 699 to 728 (ENTLGKNSFNFSDLNHSKNKVSSEGNEKGN). Residues 828 to 838 (SRLKLNKRKLA) show a composition bias toward basic residues. The span at 842–854 (ETSTKSSETGSTK) shows a compositional bias: low complexity. Over residues 855 to 866 (DNFIQNNPCNSN) the composition is skewed to polar residues. Position 1030 is a phosphoserine (serine 1030). 3 disordered regions span residues 1035 to 1095 (YPIY…YNAE), 1162 to 1231 (SRIG…DEKI), and 1537 to 1600 (RQQK…KLLK). Threonine 1041 carries the phosphothreonine modification. Composition is skewed to basic residues over residues 1043-1061 (KKSHRRKSKHKSAKKKTGK) and 1166-1179 (KTSRARAQIKKSKA). Over residues 1213–1231 (KTNEKGTSRKHTTLKDEKI) the composition is skewed to basic and acidic residues. Residues 1540-1565 (KAQNANTTQDPLSNKHQPNKNISGSL) are compositionally biased toward polar residues. Basic residues predominate over residues 1570 to 1589 (ANKRTRSVTSPRKPRTPRST). Positions 1590–1600 (KQKEKIPKLLK) are enriched in basic and acidic residues. Serine 1724 bears the Phosphoserine mark. Disordered regions lie at residues 1845–1882 (NDMLTPTPDSSPRSTSSPSQSKNGSFTPRTANILKPLM), 1962–1984 (NPRPGSPLRSGQGVVNKGSSNSP), 2017–2050 (ERSKKLPKTKPTGVVKSAENFSSSVNPDDKPVVP), 2080–2150 (PTTG…SPVE), and 2216–2236 (APGLSPLSTEPKTQKLSNKKG). The segment at 1847 to 1898 (MLTPTPDSSPRSTSSPSQSKNGSFTPRTANILKPLMSPPSREEIMATLLDHD) is mediates interaction with MAD2L2. Residues 1849-1865 (TPTPDSSPRSTSSPSQS) show a composition bias toward low complexity. Serine 1967 bears the Phosphoserine mark. Over residues 2080–2092 (PTTGCSQTASESQ) the composition is skewed to polar residues. Over residues 2113 to 2122 (YYISYSSPDS) the composition is skewed to low complexity. Residues 2221–2236 (PLSTEPKTQKLSNKKG) are compositionally biased toward polar residues. Zn(2+) contacts are provided by cysteine 3042, cysteine 3045, cysteine 3054, and cysteine 3057. Residues 3042–3057 (CPVCDDLTQHGICSKC) form a CysA-type zinc finger. Cysteine 3086, cysteine 3089, cysteine 3099, and cysteine 3104 together coordinate [4Fe-4S] cluster. The short motif at 3086–3104 (CKNCTGCFDRHIPCVSLNC) is the CysB motif element.

Belongs to the DNA polymerase type-B family. In terms of assembly, heterodimer with MAD2L2. This dimer forms the minimal DNA polymerase zeta complex (Pol-zeta2), with REV3L bearing DNA polymerase catalytic activity, although its activity is very low in this context. Component of the tetrameric Pol-zeta complex (Pol-zeta4), which consists of REV3L, MAD2L2, POLD2 and POLD3; Pol-zeta4 is the fully active form of DNA polymerase zeta. It depends on [4Fe-4S] cluster as a cofactor. Ubiquitously expressed.

It is found in the nucleus. It catalyses the reaction DNA(n) + a 2'-deoxyribonucleoside 5'-triphosphate = DNA(n+1) + diphosphate. Functionally, catalytic subunit of the DNA polymerase zeta complex, an error-prone polymerase specialized in translesion DNA synthesis (TLS). Lacks an intrinsic 3'-5' exonuclease activity and thus has no proofreading function. This is DNA polymerase zeta catalytic subunit (REV3L) from Homo sapiens (Human).